Reading from the N-terminus, the 558-residue chain is Outer membrane transporter CdiB (558 aa).

The signal sequence occupies residues 1 to 25 (MFVSSRKTGLIVCFSLIGYTASAFS). A coiled-coil region spans residues 34–62 (NETQQRQSEVIEQSRQQREALQQLNNIVQ). Residues 76-151 (FTLREIRFNH…GVLQLEILEG (76 aa)) form the POTRA domain.

The protein belongs to the TPS (TC 1.B.20) family.

It localises to the cell outer membrane. Its function is as follows. Probable outer membrane protein component of a toxin-immunity protein module, which functions as a cellular contact-dependent growth inhibition (CDI) system. CDI modules allow bacteria to communicate with and inhibit the growth of closely related neighboring bacteria in a contact-dependent fashion. This protein may be required for secretion and assembly of the CdiA toxin. Probable member of a two partner secretion pathway (TPS) in which it mediates the secretion of CdiA. In Dickeya dadantii (strain 3937) (Erwinia chrysanthemi (strain 3937)), this protein is Outer membrane transporter CdiB (cdiB).